The primary structure comprises 240 residues: uncharacterized protein (240 aa).

Asp66 acts as the Proton acceptor in catalysis. The active site involves Asp129. His131 functions as the Proton acceptor in the catalytic mechanism.

Belongs to the glucosamine/galactosamine-6-phosphate isomerase family.

This is an uncharacterized protein from Escherichia coli (strain K12).